The following is a 169-amino-acid chain: Succinate dehydrogenase cytochrome b560 subunit, mitochondrial (169 aa).

A mitochondrion-targeting transit peptide spans 1–29 (MAALLLRHVGRHCLRAHLSPQLCIRNAVP). Residues 30–62 (LGTTAKEEMERFWNKNLGSNRPLSPHITIYRWS) lie on the Mitochondrial matrix side of the membrane. The helical transmembrane segment at 63–92 (LPMAMSICHRGTGIALSAGVSLFGLSALLL) threads the bilayer. The Mitochondrial intermembrane segment spans residues 93–112 (PGNFESHLELVKSLCLGPTL). Residues 113–137 (IYTAKFGIVFPLMYHTWNGIRHLIW) form a helical membrane-spanning segment. His127 contributes to the heme b binding site. Residues 138-144 (DLGKGLT) are Mitochondrial matrix-facing. Residues 145 to 166 (IPQLTQSGVVVLILTVLSSVGL) form a helical membrane-spanning segment. Over 167 to 169 (AAM) the chain is Mitochondrial intermembrane.

It belongs to the cytochrome b560 family. Component of complex II composed of four subunits: the flavoprotein (FP) SDHA, iron-sulfur protein (IP) SDHB, and a cytochrome b560 composed of SDHC and SDHD. Heme b is required as a cofactor. Detected in heart muscle (at protein level).

It is found in the mitochondrion inner membrane. Its pathway is carbohydrate metabolism; tricarboxylic acid cycle. Membrane-anchoring subunit of succinate dehydrogenase (SDH) that is involved in complex II of the mitochondrial electron transport chain and is responsible for transferring electrons from succinate to ubiquinone (coenzyme Q). SDH also oxidizes malate to the non-canonical enol form of oxaloacetate, enol-oxaloacetate. Enol-oxaloacetate, which is a potent inhibitor of the succinate dehydrogenase activity, is further isomerized into keto-oxaloacetate. The chain is Succinate dehydrogenase cytochrome b560 subunit, mitochondrial (SDHC) from Sus scrofa (Pig).